The following is a 92-amino-acid chain: Small ribosomal subunit protein uS19 (92 aa).

The protein belongs to the universal ribosomal protein uS19 family.

In terms of biological role, protein S19 forms a complex with S13 that binds strongly to the 16S ribosomal RNA. This Prochlorococcus marinus (strain MIT 9301) protein is Small ribosomal subunit protein uS19.